A 502-amino-acid chain; its full sequence is Maturase K (502 aa).

It belongs to the intron maturase 2 family. MatK subfamily.

Its subcellular location is the plastid. The protein resides in the chloroplast. Usually encoded in the trnK tRNA gene intron. Probably assists in splicing its own and other chloroplast group II introns. The chain is Maturase K from Tilia americana (American basswood).